The chain runs to 606 residues: MTTQAPPTSLLPLSPEQLARLQAAVGEFSPTQMAWLSGYFWGMVNQQPGAVASPAVAAPPPVTVTLISASQTGNARRLAEQLRDDLLAAQLSVNLVNAGDYKFKQIAQERLLVVVASTQGEGEPAEEAVALHKFLFSKKAPKLSETAFAVFGLGDTSYEHFCQAGKDFDSKLAELGAQRLLDRVDADVEYQVQAQQWRQQVVATLQAKVPAQSTAPTQSTTPAAAAITSGGTTTVSPYSKTAPLTAQLSVQQKVTGRNSEKDVRHIEIDLGDSGLRYQPGDALGVWFDNDPALVEELLALLWLKGDEPVSIDGQNMPLAQALLSHLELTQNTTLIVDKYAALSRDETLIALLADKPALQLYAKNTPFVDMVRQAPSDLNADQLVGLLRPLTPRLYSIASSQAETENEVHITVGVVRYDIDGRARSGGASGYLADRLEVDGDIRVFIEHNDNFRLPANPETPVIMIGPGTGIAPFRAFMQQREVDGASGKNWLFFGNPHFTEDFLYQVEWQRYVKEGVLTRIDLAWSRDQAHKIYVQDKLREQGAELWNWIQQGAHIYVCGDANRMAKDVEQVLLDVVALHGAMDAEQADEYLSELRQARRYQRDVY.

The Flavodoxin-like domain maps to 64–202 (VTLISASQTG…QAQQWRQQVV (139 aa)). FMN contacts are provided by residues 70 to 75 (SQTGNA), 117 to 120 (STQG), and 153 to 162 (LGDTSYEHFC). Low complexity predominate over residues 212–234 (QSTAPTQSTTPAAAAITSGGTTT). Residues 212 to 235 (QSTAPTQSTTPAAAAITSGGTTTV) are disordered. Residues 241-455 (TAPLTAQLSV…IEHNDNFRLP (215 aa)) form the FAD-binding FR-type domain. Residues Thr-329, Lys-363, 393–396 (RLYS), 411–413 (TVG), Tyr-417, and 426–429 (GGAS) contribute to the FAD site. NADP(+)-binding positions include 526–527 (SR), 532–536 (KIYVQ), and Asp-568. Residue Tyr-606 coordinates FAD.

Belongs to the NADPH-dependent sulphite reductase flavoprotein subunit CysJ family. The protein in the N-terminal section; belongs to the flavodoxin family. It in the C-terminal section; belongs to the flavoprotein pyridine nucleotide cytochrome reductase family. In terms of assembly, alpha(8)-beta(8). The alpha component is a flavoprotein, the beta component is a hemoprotein. Requires FAD as cofactor. FMN is required as a cofactor.

The enzyme catalyses hydrogen sulfide + 3 NADP(+) + 3 H2O = sulfite + 3 NADPH + 4 H(+). The protein operates within sulfur metabolism; hydrogen sulfide biosynthesis; hydrogen sulfide from sulfite (NADPH route): step 1/1. Functionally, component of the sulfite reductase complex that catalyzes the 6-electron reduction of sulfite to sulfide. This is one of several activities required for the biosynthesis of L-cysteine from sulfate. The flavoprotein component catalyzes the electron flow from NADPH -&gt; FAD -&gt; FMN to the hemoprotein component. This chain is Sulfite reductase [NADPH] flavoprotein alpha-component, found in Yersinia pestis bv. Antiqua (strain Antiqua).